The following is a 669-amino-acid chain: DNA ligase (669 aa).

NAD(+) is bound by residues 31-35, 80-81, and glutamate 112; these read DAEYD and SL. Lysine 114 (N6-AMP-lysine intermediate) is an active-site residue. Positions 135, 172, 289, and 313 each coordinate NAD(+). Cysteine 407, cysteine 410, cysteine 425, and cysteine 431 together coordinate Zn(2+). Residues 591–669 form the BRCT domain; that stretch reads SVPQPLADKV…EEQLIEILNN (79 aa).

The protein belongs to the NAD-dependent DNA ligase family. LigA subfamily. The cofactor is Mg(2+). Requires Mn(2+) as cofactor.

The enzyme catalyses NAD(+) + (deoxyribonucleotide)n-3'-hydroxyl + 5'-phospho-(deoxyribonucleotide)m = (deoxyribonucleotide)n+m + AMP + beta-nicotinamide D-nucleotide.. DNA ligase that catalyzes the formation of phosphodiester linkages between 5'-phosphoryl and 3'-hydroxyl groups in double-stranded DNA using NAD as a coenzyme and as the energy source for the reaction. It is essential for DNA replication and repair of damaged DNA. In Aliivibrio salmonicida (strain LFI1238) (Vibrio salmonicida (strain LFI1238)), this protein is DNA ligase.